An 81-amino-acid chain; its full sequence is Photosystem I iron-sulfur center (81 aa).

4Fe-4S ferredoxin-type domains follow at residues 2–31 (AHSVKIYDTCIGCTQCVRACPTDVLEMIPW) and 39–68 (IASAPRTEDCVGCKRCESACPTDFLSVRVY). [4Fe-4S] cluster is bound by residues C11, C14, C17, C21, C48, C51, C54, and C58.

In terms of assembly, the eukaryotic PSI reaction center is composed of at least 11 subunits. Requires [4Fe-4S] cluster as cofactor.

It localises to the plastid. The protein resides in the chloroplast thylakoid membrane. It carries out the reaction reduced [plastocyanin] + hnu + oxidized [2Fe-2S]-[ferredoxin] = oxidized [plastocyanin] + reduced [2Fe-2S]-[ferredoxin]. Apoprotein for the two 4Fe-4S centers FA and FB of photosystem I (PSI); essential for photochemical activity. FB is the terminal electron acceptor of PSI, donating electrons to ferredoxin. The C-terminus interacts with PsaA/B/D and helps assemble the protein into the PSI complex. Required for binding of PsaD and PsaE to PSI. PSI is a plastocyanin-ferredoxin oxidoreductase, converting photonic excitation into a charge separation, which transfers an electron from the donor P700 chlorophyll pair to the spectroscopically characterized acceptors A0, A1, FX, FA and FB in turn. In Zygnema circumcarinatum (Green alga), this protein is Photosystem I iron-sulfur center.